We begin with the raw amino-acid sequence, 92 residues long: Elongation factor 1-beta (92 aa).

The protein belongs to the EF-1-beta/EF-1-delta family.

Its function is as follows. Promotes the exchange of GDP for GTP in EF-1-alpha/GDP, thus allowing the regeneration of EF-1-alpha/GTP that could then be used to form the ternary complex EF-1-alpha/GTP/AAtRNA. This Pyrobaculum aerophilum (strain ATCC 51768 / DSM 7523 / JCM 9630 / CIP 104966 / NBRC 100827 / IM2) protein is Elongation factor 1-beta (ef1b).